The following is a 691-amino-acid chain: Elongation factor G 2 (691 aa).

One can recognise a tr-type G domain in the interval 8-287 (DRYRNIGIMA…AVVDYLPSPL (280 aa)). GTP is bound by residues 17-24 (AHIDAGKT), 85-89 (DTPGH), and 139-142 (NKMD).

This sequence belongs to the TRAFAC class translation factor GTPase superfamily. Classic translation factor GTPase family. EF-G/EF-2 subfamily.

It localises to the cytoplasm. Functionally, catalyzes the GTP-dependent ribosomal translocation step during translation elongation. During this step, the ribosome changes from the pre-translocational (PRE) to the post-translocational (POST) state as the newly formed A-site-bound peptidyl-tRNA and P-site-bound deacylated tRNA move to the P and E sites, respectively. Catalyzes the coordinated movement of the two tRNA molecules, the mRNA and conformational changes in the ribosome. The chain is Elongation factor G 2 from Myxococcus xanthus (strain DK1622).